The following is a 353-amino-acid chain: Ferredoxin--NADP reductase 1 (353 aa).

Aspartate 43, glutamine 51, tyrosine 56, alanine 96, phenylalanine 135, aspartate 300, and serine 341 together coordinate FAD.

It belongs to the ferredoxin--NADP reductase type 2 family. In terms of assembly, homodimer. The cofactor is FAD.

The enzyme catalyses 2 reduced [2Fe-2S]-[ferredoxin] + NADP(+) + H(+) = 2 oxidized [2Fe-2S]-[ferredoxin] + NADPH. The polypeptide is Ferredoxin--NADP reductase 1 (Cupriavidus metallidurans (strain ATCC 43123 / DSM 2839 / NBRC 102507 / CH34) (Ralstonia metallidurans)).